A 386-amino-acid polypeptide reads, in one-letter code: MSKNYLFTSESVSEGHPDKLADQISDAILDEILKQDKNARVACETLVKTGMALVAGEITTSAWVDIKELVRNVITETGYDNASKGIDGRTCSVINAIDKQSRDITQGVDRGSLEDLGAGDQGLMFGFATNETPTLMPSAIYYSHLLMRKQAELRKSGKLAWLRPDAKAQVTLAYENDKPKFIDTIVLSTQHNESISQKELHDAVIEEIVKKVIPNELITKDTKYHINPTGVFLIGGPQGDCGLTGRKIIVDTYGGAAHHGGGAFSGKDPSKVDRSGAYMGRYIAKNIVAAGLADKCEVQVAYAIGVAKPVSLMVNTFGTGKITDNQIEKLVAEVFDLRVGKIIENLDLLRPIYRKTSNYGHFGRELPEFTWEKIDKADILKSAARI.

Histidine 16 lines the ATP pocket. A Mg(2+)-binding site is contributed by aspartate 18. K(+) is bound at residue glutamate 44. Residues glutamate 57 and glutamine 100 each coordinate L-methionine. Positions 100–110 (QSRDITQGVDR) are flexible loop. ATP contacts are provided by residues 165–167 (DAK), aspartate 240, 246–247 (RK), alanine 263, and lysine 267. Aspartate 240 contacts L-methionine. L-methionine is bound at residue lysine 271.

Belongs to the AdoMet synthase family. As to quaternary structure, homotetramer; dimer of dimers. Mg(2+) serves as cofactor. It depends on K(+) as a cofactor.

It is found in the cytoplasm. The catalysed reaction is L-methionine + ATP + H2O = S-adenosyl-L-methionine + phosphate + diphosphate. It functions in the pathway amino-acid biosynthesis; S-adenosyl-L-methionine biosynthesis; S-adenosyl-L-methionine from L-methionine: step 1/1. Catalyzes the formation of S-adenosylmethionine (AdoMet) from methionine and ATP. The overall synthetic reaction is composed of two sequential steps, AdoMet formation and the subsequent tripolyphosphate hydrolysis which occurs prior to release of AdoMet from the enzyme. This Francisella tularensis subsp. tularensis (strain WY96-3418) protein is S-adenosylmethionine synthase.